Reading from the N-terminus, the 184-residue chain is Large ribosomal subunit protein uL6 (184 aa).

It belongs to the universal ribosomal protein uL6 family. Part of the 50S ribosomal subunit.

This protein binds to the 23S rRNA, and is important in its secondary structure. It is located near the subunit interface in the base of the L7/L12 stalk, and near the tRNA binding site of the peptidyltransferase center. In Thermosipho melanesiensis (strain DSM 12029 / CIP 104789 / BI429), this protein is Large ribosomal subunit protein uL6.